A 318-amino-acid chain; its full sequence is Ferric enterobactin-binding periplasmic protein FepB (318 aa).

The first 26 residues, 1-26 (MRLAPLYRNALLLTGLLLSGIAAVQA), serve as a signal peptide directing secretion. A Fe/B12 periplasmic-binding domain is found at 48 to 318 (RIVSTSVTLT…QVLDRLKALF (271 aa)).

This sequence belongs to the bacterial solute-binding protein 8 family. As to quaternary structure, the complex is composed of two ATP-binding proteins (FepC), two transmembrane proteins (FepD and FepG) and a solute-binding protein (FepB).

It localises to the periplasm. In terms of biological role, part of the ABC transporter complex FepBDGC involved in ferric enterobactin uptake. Binds ferric enterobactin. This Escherichia coli O6:H1 (strain CFT073 / ATCC 700928 / UPEC) protein is Ferric enterobactin-binding periplasmic protein FepB (fepB).